We begin with the raw amino-acid sequence, 391 residues long: 3-ketoacyl-CoA thiolase (391 aa).

Cysteine 95 acts as the Acyl-thioester intermediate in catalysis. Active-site proton acceptor residues include histidine 347 and cysteine 377.

This sequence belongs to the thiolase-like superfamily. Thiolase family. In terms of assembly, heterotetramer of two alpha chains (FadB) and two beta chains (FadA).

It localises to the cytoplasm. The catalysed reaction is an acyl-CoA + acetyl-CoA = a 3-oxoacyl-CoA + CoA. Its pathway is lipid metabolism; fatty acid beta-oxidation. Its function is as follows. Catalyzes the final step of fatty acid oxidation in which acetyl-CoA is released and the CoA ester of a fatty acid two carbons shorter is formed. This Pseudomonas fragi protein is 3-ketoacyl-CoA thiolase.